The chain runs to 282 residues: Acetylglutamate kinase (282 aa).

Substrate is bound by residues 62 to 63 (GG), Arg-84, and Asn-178.

The protein belongs to the acetylglutamate kinase family. ArgB subfamily.

It localises to the cytoplasm. The catalysed reaction is N-acetyl-L-glutamate + ATP = N-acetyl-L-glutamyl 5-phosphate + ADP. It functions in the pathway amino-acid biosynthesis; L-arginine biosynthesis; N(2)-acetyl-L-ornithine from L-glutamate: step 2/4. In terms of biological role, catalyzes the ATP-dependent phosphorylation of N-acetyl-L-glutamate. This chain is Acetylglutamate kinase, found in Thermotoga sp. (strain RQ2).